The chain runs to 246 residues: UPF0246 protein stu1967 (246 aa).

This sequence belongs to the UPF0246 family.

The sequence is that of UPF0246 protein stu1967 from Streptococcus thermophilus (strain ATCC BAA-250 / LMG 18311).